Reading from the N-terminus, the 411-residue chain is MAEKTEKPTAKKLRDAAKKGQTFKARDIVALIVIATGALAAPALVDLTRIAAEFVRIASTGAQPNPGAYAFAWAKLFLRIAAPFVLLCAAAGALPSLVQSRFTLAVESIRFDLTALDPVKGMKRLFSWRSAKDAVKALLYVGVFALTVRVFADLYHADVFGLFRARPALLGHMWIVLTVRLVLLFLLCALPVLILDAAVEYFLYHRELKMDKHEVKQEYKESEGNHEIKSKRREIHQELLSEEIKANVEQSDFIVANPTHIAIGVYVNPDIVPIPFVSVRETNARALAVIRHAEACGVPVVRNVALARSIYRNSPRRYSFVSHDDIDGVMRVLIWLGEVEAANRGGPPPETRAPTSAEPQARDGVAPPGDACADNAFPDDAPPGAAAPNAGSPDGPAPDGGAPARTGDQNA.

4 helical membrane-spanning segments follow: residues 28 to 48, 80 to 100, 137 to 157, and 175 to 195; these read IVAL…VDLT, IAAP…LVQS, ALLY…LYHA, and IVLT…VLIL. The interval 341–411 is disordered; that stretch reads AANRGGPPPE…APARTGDQNA (71 aa). Over residues 370–404 the composition is skewed to low complexity; the sequence is DACADNAFPDDAPPGAAAPNAGSPDGPAPDGGAPA.

This sequence belongs to the type III secretion exporter family.

It localises to the cell membrane. In terms of biological role, part of the bsa type III secretion system, is involved in the intracellular replication of invading bacteria inside the host cell. Probably necessary for the lysis of the vacuole membrane and escape into the host cell cytoplasm. This chain is Secretion apparatus protein BsaZ (bsaZ), found in Burkholderia pseudomallei (strain K96243).